The primary structure comprises 442 residues: MIQPRTLKGFRDYLPAAMIPREQLMQTAREVFRSFGFAPIDTPTLEHLEILTGKGSDETDRQLYSFEDNGGRPVGMRFDLTVPLARFAAQHIGTLGTPFKRYHIAPVWRGEKPQEGRYREFVQCDFDTIGTTSELADIEAVCVIDALLRAIGIDAFTISINNRAILTGLLESLGLADKTTPVLRSLDKLGKIGREKTANEMVESAGVTAEQADAVLRLAECDGDAESILASLPEITGGNETAAAGIERLTQIYRGALASGVSPDRLKIDVSIARGLDYYTGVIFETTLDELPGIGSVCSGGRYDNLAGLYTKQHLPGIGASLGLDRLLAALESLGRLSGVSKPCAVFVPFFDKGHRDDYLKLASQLRDAGIGVEVYPEPKKLGQQLKYADSQGFAVAIIAGGNEWEAGAVQVKTLATKESQDVAYSHESPDALIEAIQAATS.

Belongs to the class-II aminoacyl-tRNA synthetase family. Homodimer.

It localises to the cytoplasm. The enzyme catalyses tRNA(His) + L-histidine + ATP = L-histidyl-tRNA(His) + AMP + diphosphate + H(+). The polypeptide is Histidine--tRNA ligase (Rhodopirellula baltica (strain DSM 10527 / NCIMB 13988 / SH1)).